A 158-amino-acid chain; its full sequence is Small ribosomal subunit protein uS10m (158 aa).

Belongs to the universal ribosomal protein uS10 family.

Its subcellular location is the mitochondrion. The protein is Small ribosomal subunit protein uS10m (mrps-10) of Caenorhabditis briggsae.